Consider the following 195-residue polypeptide: Protein SYM1 (195 aa).

The next 4 membrane-spanning stretches (helical) occupy residues 17–39, 59–78, 99–121, and 168–190; these read LITN…QFFF, RAII…WYKF, STLL…PLYY, and PVQF…LSYV.

Belongs to the peroxisomal membrane protein PXMP2/4 family.

The protein resides in the mitochondrion inner membrane. In terms of biological role, may be involved in cellular response to stress. Required to maintain mitochondrial DNA (mtDNA) integrity and stability. This Candida albicans (strain SC5314 / ATCC MYA-2876) (Yeast) protein is Protein SYM1 (SYM1).